We begin with the raw amino-acid sequence, 206 residues long: Dephospho-CoA kinase (206 aa).

Positions 4 to 200 (IVALTGGIGS…AHYLQLASQF (197 aa)) constitute a DPCK domain. 12-17 (GSGKST) provides a ligand contact to ATP.

The protein belongs to the CoaE family.

The protein localises to the cytoplasm. The enzyme catalyses 3'-dephospho-CoA + ATP = ADP + CoA + H(+). The protein operates within cofactor biosynthesis; coenzyme A biosynthesis; CoA from (R)-pantothenate: step 5/5. Its function is as follows. Catalyzes the phosphorylation of the 3'-hydroxyl group of dephosphocoenzyme A to form coenzyme A. The protein is Dephospho-CoA kinase of Shigella boydii serotype 4 (strain Sb227).